Reading from the N-terminus, the 54-residue chain is Synaptosomal-associated protein 25 (54 aa).

This sequence belongs to the SNAP-25 family. Part of the SNARE core complex containing SNAP25, VAMP2 and STX1A; this complex binds CPLX1. Found in a complex containing SYT1, SV2B and syntaxin-1. Found in a ternary complex with STX1A and VAMP8. Interacts with HSC70 and with SYT9, forming a complex with DNAJC5. The interaction with SYT9 is inhibited in presence of calcium. Isoform 1 and isoform 2 interact with BLOC1S6. Interacts with CENPF. Interacts with EQTN. Interacts with HGS. Interacts with KCNB1 (via N-terminus); reduces the voltage-dependent potassium channel KCNB1 activity in pancreatic beta cells. Interacts with OTOF. Interacts with RIMS1. Interacts with SNAPIN. Interacts with STXBP6. Interacts with TRIM9. Interacts with ZDHHC13 (via ANK repeats). Interacts with ZDHHC17 (via ANK repeats). Associates with the BLOC-1 complex. Interacts with PLCL1 (via C2 domain). Interacts with PRRT2; this interaction may impair the formation of the SNARE complex. Interacts with alpha-synuclein/SNCA. Interacts with PRPH2. Interacts with ROM1. Interacts with STX3. The N-terminus is blocked.

The protein resides in the cytoplasm. The protein localises to the perinuclear region. Its subcellular location is the cell membrane. It is found in the synapse. It localises to the synaptosome. The protein resides in the photoreceptor inner segment. Its function is as follows. t-SNARE involved in the molecular regulation of neurotransmitter release. May play an important role in the synaptic function of specific neuronal systems. Associates with proteins involved in vesicle docking and membrane fusion. Regulates plasma membrane recycling through its interaction with CENPF. Modulates the gating characteristics of the delayed rectifier voltage-dependent potassium channel KCNB1 in pancreatic beta cells. The polypeptide is Synaptosomal-associated protein 25 (SNAP25) (Oryctolagus cuniculus (Rabbit)).